Consider the following 642-residue polypeptide: 3D-(3,5/4)-trihydroxycyclohexane-1,2-dione hydrolase (642 aa).

Glutamate 71 serves as a coordination point for thiamine diphosphate. Residues 446–526 are thiamine pyrophosphate binding; sequence SLPGDVQRIW…INILVFDNSG (81 aa). Residues aspartate 497 and asparagine 524 each coordinate Mg(2+).

This sequence belongs to the TPP enzyme family. Mg(2+) serves as cofactor. It depends on thiamine diphosphate as a cofactor.

The catalysed reaction is 3D-3,5/4-trihydroxycyclohexane-1,2-dione + H2O = 5-deoxy-D-glucuronate + H(+). Its pathway is polyol metabolism; myo-inositol degradation into acetyl-CoA; acetyl-CoA from myo-inositol: step 3/7. Functionally, involved in the cleavage of the C1-C2 bond of 3D-(3,5/4)-trihydroxycyclohexane-1,2-dione (THcHDO) to yield 5-deoxy-glucuronate (5DG). The chain is 3D-(3,5/4)-trihydroxycyclohexane-1,2-dione hydrolase from Lacticaseibacillus casei (Lactobacillus casei).